A 104-amino-acid polypeptide reads, in one-letter code: MFAVIKTGGKQYRVAANDVLTIEKLEAEAGAIVEFTEILVVGVGADATIGAPFVAGATVKAEVVEHNRGKKVIAFKKRRRQNSKRSRGHRQHHTVVRITDIVAA.

The protein belongs to the bacterial ribosomal protein bL21 family. As to quaternary structure, part of the 50S ribosomal subunit. Contacts protein L20.

This protein binds to 23S rRNA in the presence of protein L20. The polypeptide is Large ribosomal subunit protein bL21 (Allorhizobium ampelinum (strain ATCC BAA-846 / DSM 112012 / S4) (Agrobacterium vitis (strain S4))).